Consider the following 122-residue polypeptide: Large ribosomal subunit protein uL14 (122 aa).

The protein belongs to the universal ribosomal protein uL14 family. In terms of assembly, part of the 50S ribosomal subunit. Forms a cluster with proteins L3 and L19. In the 70S ribosome, L14 and L19 interact and together make contacts with the 16S rRNA in bridges B5 and B8.

Binds to 23S rRNA. Forms part of two intersubunit bridges in the 70S ribosome. In Psychrobacter arcticus (strain DSM 17307 / VKM B-2377 / 273-4), this protein is Large ribosomal subunit protein uL14.